Reading from the N-terminus, the 314-residue chain is MIEIEKPKIETVELNEDAKYGKFVIEPLERGYGTTLGNSLRRILLSSLPGAAVTAIQIDGVLHEFSTVEGVVEDVTTIILNLKKLALKIYSDEEKTLEIDVQGEGIVTAADITHDSDVEILNPDLYIATLAKDAHFRVRLTAKRGRGYTPADANKSEDQPIGVIPIDSIYTPVSRVTYQVEKTRVGQVANYDKLTLDVWTDGSIGPKEAISLGAKILTEHLNIFVGLTDEAQNAEIMVEKEEDQKEKVLEMTIEELDLSVRSYNCLKRAGINTVQELANKTEEDMMKVRNLGRKSLEEVKHKLEELGLGLRKDD.

An alpha N-terminal domain (alpha-NTD) region spans residues 1–228; sequence MIEIEKPKIE…EHLNIFVGLT (228 aa). An alpha C-terminal domain (alpha-CTD) region spans residues 246–314; it reads EKVLEMTIEE…ELGLGLRKDD (69 aa).

This sequence belongs to the RNA polymerase alpha chain family. As to quaternary structure, homodimer. The RNAP catalytic core consists of 2 alpha, 1 beta, 1 beta' and 1 omega subunit. When a sigma factor is associated with the core the holoenzyme is formed, which can initiate transcription.

It catalyses the reaction RNA(n) + a ribonucleoside 5'-triphosphate = RNA(n+1) + diphosphate. Its function is as follows. DNA-dependent RNA polymerase catalyzes the transcription of DNA into RNA using the four ribonucleoside triphosphates as substrates. This Bacillus cytotoxicus (strain DSM 22905 / CIP 110041 / 391-98 / NVH 391-98) protein is DNA-directed RNA polymerase subunit alpha.